A 144-amino-acid chain; its full sequence is Ninjurin-2 (144 aa).

The Extracellular portion of the chain corresponds to 1–62 (MESDREIIHL…KSVLEQGPFS (62 aa)). The segment at 27–39 (NHYATKKSVAESM) is helix alpha1. The tract at residues 40–59 (LDVALFMSNAMRLKSVLEQG) is helix alpha2. Residues 63–94 (QYYTTLLTLISASLLLQVVIGILLVVIARLNL) form a helical membrane-spanning segment. Over 95–98 (NEVE) the chain is Cytoplasmic. The chain crosses the membrane as a helical span at residues 99 to 128 (NQWRLNQLNNAATTLVFITVVINIFITAFG). Residue glutamine 105 participates in cholesterol binding. The Extracellular segment spans residues 129 to 144 (AHKTGSVAARTSSNPI).

Belongs to the ninjurin family. As to quaternary structure, homooligomer; in response to stimuli, homooligomerizes into filaments. In contrast to NINJ1, the filament is curved toward the intracellular space, preventing its circularization on a relatively flat membrane to mediate plasma membrane rupture: curvature is caused by cholesterol-binding at the cytoplasmic leaflet.

The protein resides in the cell membrane. In terms of biological role, its role in unclear. In contrast to NINJ1 paralog, does not mediate plasma membrane rupture (cytolysis) downstream of necroptotic and pyroptotic programmed cell death. While it is able to oligomerize and form filaments, filaments are curved toward the intracellular space, preventing circularization to mediate plasma membrane rupture. May act as a homophilic transmembrane adhesion molecule involved in nerve regeneration. Promotes axonal growth. The sequence is that of Ninjurin-2 (Ninj2) from Rattus norvegicus (Rat).